A 65-amino-acid polypeptide reads, in one-letter code: GDEEDEVEETLPVAEEGREKSCTTWRNSCMHNDKGCCFPWSCVCWSQTVSRNSSRKEKKCQCRLW.

The propeptide occupies 1-18 (GDEEDEVEETLPVAEEGR). Cystine bridges form between C22–C37, C29–C42, C36–C62, and C44–C60.

This sequence belongs to the neurotoxin omega-lctx family. Expressed by the venom gland.

It localises to the secreted. Functionally, modulates Cav2.1/CACNA1A voltage-gated calcium channels (P/Q-type currents) in rat cerebellar Purkinje cells and hippocampal CA1-CA3 neurons. At saturating concentrations (&gt;10 nM) decelerates activation kinetics and slightly increases peak amplitude without affecting deactivation kinetics. In vivo, does not cause death when intravenously injected into mice. In rat models, through its activity on Cav2.1/CACNA1A, has an ameliorative effect on memory defects provoked by hyperstimulation of N-methyl-D-aspartate receptors (NMDARs) in the hippocampus. The protein is Omega-lycotoxin-Am1f of Alopecosa marikovskyi (Wolf spider).